A 79-amino-acid polypeptide reads, in one-letter code: uncharacterized protein (79 aa).

Residues 1 to 24 form the signal peptide; sequence MKMNPCTVILCKSLFFFCLFQVDC. Asparagine 33 is a glycosylation site (N-linked (GlcNAc...) asparagine).

It is found in the secreted. This is an uncharacterized protein from Saccharomyces cerevisiae (strain ATCC 204508 / S288c) (Baker's yeast).